Here is a 339-residue protein sequence, read N- to C-terminus: Ribosomal RNA small subunit methyltransferase H (339 aa).

S-adenosyl-L-methionine is bound by residues 44 to 46, aspartate 61, phenylalanine 88, aspartate 105, and glutamine 112; that span reads GGY. Residues 263–312 are disordered; the sequence is PQAQSRHLPEKAAAQPVFEKPMKPVSPGEAETAENPRARSAHLRAARRTA. Over residues 301 to 312 the composition is skewed to basic residues; that stretch reads RSAHLRAARRTA.

It belongs to the methyltransferase superfamily. RsmH family.

It localises to the cytoplasm. It catalyses the reaction cytidine(1402) in 16S rRNA + S-adenosyl-L-methionine = N(4)-methylcytidine(1402) in 16S rRNA + S-adenosyl-L-homocysteine + H(+). Its function is as follows. Specifically methylates the N4 position of cytidine in position 1402 (C1402) of 16S rRNA. The protein is Ribosomal RNA small subunit methyltransferase H of Chelativorans sp. (strain BNC1).